Consider the following 273-residue polypeptide: Imidazole glycerol phosphate synthase subunit HisF (273 aa).

Catalysis depends on residues aspartate 11 and aspartate 134.

The protein belongs to the HisA/HisF family. Heterodimer of HisH and HisF.

It is found in the cytoplasm. It catalyses the reaction 5-[(5-phospho-1-deoxy-D-ribulos-1-ylimino)methylamino]-1-(5-phospho-beta-D-ribosyl)imidazole-4-carboxamide + L-glutamine = D-erythro-1-(imidazol-4-yl)glycerol 3-phosphate + 5-amino-1-(5-phospho-beta-D-ribosyl)imidazole-4-carboxamide + L-glutamate + H(+). It functions in the pathway amino-acid biosynthesis; L-histidine biosynthesis; L-histidine from 5-phospho-alpha-D-ribose 1-diphosphate: step 5/9. Its function is as follows. IGPS catalyzes the conversion of PRFAR and glutamine to IGP, AICAR and glutamate. The HisF subunit catalyzes the cyclization activity that produces IGP and AICAR from PRFAR using the ammonia provided by the HisH subunit. The sequence is that of Imidazole glycerol phosphate synthase subunit HisF from Methanocella arvoryzae (strain DSM 22066 / NBRC 105507 / MRE50).